The chain runs to 96 residues: ATP synthase subunit c (96 aa).

Helical transmembrane passes span glycine 26–glycine 46 and isoleucine 68–valine 88.

Belongs to the ATPase C chain family. As to quaternary structure, F-type ATPases have 2 components, F(1) - the catalytic core - and F(0) - the membrane proton channel. F(1) has five subunits: alpha(3), beta(3), gamma(1), delta(1), epsilon(1). F(0) has three main subunits: a(1), b(2) and c(10-14). The alpha and beta chains form an alternating ring which encloses part of the gamma chain. F(1) is attached to F(0) by a central stalk formed by the gamma and epsilon chains, while a peripheral stalk is formed by the delta and b chains.

It localises to the cell inner membrane. In terms of biological role, f(1)F(0) ATP synthase produces ATP from ADP in the presence of a proton or sodium gradient. F-type ATPases consist of two structural domains, F(1) containing the extramembraneous catalytic core and F(0) containing the membrane proton channel, linked together by a central stalk and a peripheral stalk. During catalysis, ATP synthesis in the catalytic domain of F(1) is coupled via a rotary mechanism of the central stalk subunits to proton translocation. Key component of the F(0) channel; it plays a direct role in translocation across the membrane. A homomeric c-ring of between 10-14 subunits forms the central stalk rotor element with the F(1) delta and epsilon subunits. The polypeptide is ATP synthase subunit c (Oleidesulfovibrio alaskensis (strain ATCC BAA-1058 / DSM 17464 / G20) (Desulfovibrio alaskensis)).